We begin with the raw amino-acid sequence, 124 residues long: Thioredoxin domain-containing protein C21C3.12c (124 aa).

In terms of domain architecture, Thioredoxin spans 37–124 (PWCPTVRAAL…ANKFSKFIDI (88 aa)). Cys39 serves as the catalytic Nucleophile.

Belongs to the thioredoxin family.

Its subcellular location is the cytoplasm. It localises to the nucleus. The chain is Thioredoxin domain-containing protein C21C3.12c from Schizosaccharomyces pombe (strain 972 / ATCC 24843) (Fission yeast).